Here is a 475-residue protein sequence, read N- to C-terminus: Pup--protein ligase (475 aa).

Glu-19 serves as a coordination point for Mg(2+). Position 64 (Arg-64) interacts with ATP. Tyr-66 is a Mg(2+) binding site. Asp-68 functions as the Proton acceptor in the catalytic mechanism. Glu-74 serves as a coordination point for Mg(2+). Positions 77 and 436 each coordinate ATP.

Belongs to the Pup ligase/Pup deamidase family. Pup-conjugating enzyme subfamily.

The catalysed reaction is ATP + [prokaryotic ubiquitin-like protein]-L-glutamate + [protein]-L-lysine = ADP + phosphate + N(6)-([prokaryotic ubiquitin-like protein]-gamma-L-glutamyl)-[protein]-L-lysine.. It participates in protein degradation; proteasomal Pup-dependent pathway. The protein operates within protein modification; protein pupylation. Its function is as follows. Catalyzes the covalent attachment of the prokaryotic ubiquitin-like protein modifier Pup to the proteasomal substrate proteins, thereby targeting them for proteasomal degradation. This tagging system is termed pupylation. The ligation reaction involves the side-chain carboxylate of the C-terminal glutamate of Pup and the side-chain amino group of a substrate lysine. This chain is Pup--protein ligase, found in Corynebacterium aurimucosum (strain ATCC 700975 / DSM 44827 / CIP 107346 / CN-1) (Corynebacterium nigricans).